A 950-amino-acid polypeptide reads, in one-letter code: Valine--tRNA ligase, mitochondrial (950 aa).

Residues Met1–Phe90 constitute a mitochondrion transit peptide. Positions Pro67–His77 match the 'HIGH' region motif. The 'KMSKS' region motif lies at Lys556 to Ser560. Lys559 is an ATP binding site.

The protein belongs to the class-I aminoacyl-tRNA synthetase family.

It localises to the mitochondrion. The catalysed reaction is tRNA(Val) + L-valine + ATP = L-valyl-tRNA(Val) + AMP + diphosphate. This Schizosaccharomyces pombe (strain 972 / ATCC 24843) (Fission yeast) protein is Valine--tRNA ligase, mitochondrial (vas1).